We begin with the raw amino-acid sequence, 169 residues long: Ribosome maturation factor RimM (169 aa).

The 75-residue stretch at 94–168 (EEGQYYYHQI…KVIVELLEGL (75 aa)) folds into the PRC barrel domain.

Belongs to the RimM family. In terms of assembly, binds ribosomal protein uS19.

Its subcellular location is the cytoplasm. Its function is as follows. An accessory protein needed during the final step in the assembly of 30S ribosomal subunit, possibly for assembly of the head region. Essential for efficient processing of 16S rRNA. May be needed both before and after RbfA during the maturation of 16S rRNA. It has affinity for free ribosomal 30S subunits but not for 70S ribosomes. This is Ribosome maturation factor RimM from Limosilactobacillus fermentum (strain NBRC 3956 / LMG 18251) (Lactobacillus fermentum).